We begin with the raw amino-acid sequence, 363 residues long: MNMFNAHIPSYLVPKNLNSNWNVGFILGILLILQILSGLLLTFFYVPCKEGAFESLSRLVTETQFGWFVRLYHSVGVSFYFFFMFIHIIKGMWYSSKYMPWSWYSGIVILILSIVIAFTGYVLPDGQMSFWGATVISNLLEWFGKAKVITFGGFTVGPETLKRFFILHFVLPAVVLVIVLLHLYFLHREGSSNPLTLAEAVALLKFYQLILFSDVKFLVIISMFIGPQVGYGIWTLFQADNDNSILSSSENTPAHIIPEWYLLLFYATLKVFPTKVSGLVAMVVVLKLLIILVESRSKSQAVSTAHHHRVWTTTSVPLVPALFLLGCIGRMVINLDLIIIGIYGVLLSTTFVQKLLDSSRVRA.

4 consecutive transmembrane segments (helical) span residues 23-43 (VGFI…LLTF), 67-89 (WFVR…IHII), 102-122 (SWYS…TGYV), and 164-184 (FFIL…LHLY). Positions 73 and 87 each coordinate heme b. The heme b site is built by histidine 168 and histidine 182. Histidine 187 lines the a ubiquinone pocket. Helical transmembrane passes span 210-230 (ILFS…PQVG), 271-291 (VFPT…LLII), 309-329 (RVWT…GCIG), and 332-352 (VINL…TTFV).

It belongs to the cytochrome b family. The main subunits of complex b-c1 are: cytochrome b, cytochrome c1 and the Rieske protein. Requires heme b as cofactor.

The protein resides in the mitochondrion inner membrane. In terms of biological role, component of the ubiquinol-cytochrome c reductase complex (complex III or cytochrome b-c1 complex) that is part of the mitochondrial respiratory chain. The b-c1 complex mediates electron transfer from ubiquinol to cytochrome c. Contributes to the generation of a proton gradient across the mitochondrial membrane that is then used for ATP synthesis. The polypeptide is Cytochrome b (MT-CYB) (Theileria parva (East coast fever infection agent)).